Consider the following 66-residue polypeptide: Beta-toxin Cb2 (66 aa).

Positions 1 to 66 (KEGYLVDLHT…VWPLPNKRCK (66 aa)) constitute an LCN-type CS-alpha/beta domain. 4 disulfide bridges follow: C12/C65, C16/C41, C25/C46, and C29/C48.

It belongs to the long (4 C-C) scorpion toxin superfamily. Sodium channel inhibitor family. Beta subfamily. As to expression, expressed by the venom gland.

Its subcellular location is the secreted. Beta toxins bind voltage-independently at site-4 of sodium channels (Nav) and reduces peak current and shifts the voltage of activation toward more negative potentials thereby affecting sodium channel activation and promoting spontaneous and repetitive firing. Has an inhibitory effect on voltage-gated sodium channel hNav1.6/SCN8A, affecting both the activation and inactivation processes. Also reduces the peak current of hNav1.5/SCN5A but does not shift its voltage of activation. This toxin is active against mammals and lethal to mice. The polypeptide is Beta-toxin Cb2 (Centruroides baergi (Scorpion)).